The chain runs to 261 residues: uncharacterized protein (261 aa).

Residues 1-12 are compositionally biased toward polar residues; that stretch reads MSRTSSQNQEII. Residues 1–139 are disordered; the sequence is MSRTSSQNQE…KELDTINKKT (139 aa). Residues 23 to 55 are compositionally biased toward low complexity; that stretch reads SSKPSKSSKPSKSSKPSKSSKTSKSSRSSGSKS. Basic and acidic residues predominate over residues 65-74; it reads SRKDKYKEEY. Residues 79–108 are compositionally biased toward acidic residues; it reads YPDEQEYEQEYEQEYEQEYQDNGEQTEEFV. Basic and acidic residues predominate over residues 122–139; sequence DERQTQSNKELDTINKKT. 2 coiled-coil regions span residues 151–181 and 218–243; these read MDHD…IIKL and EDII…KKIE.

This is an uncharacterized protein from Acanthamoeba polyphaga (Amoeba).